The following is a 97-amino-acid chain: Co-chaperonin GroES (97 aa).

Belongs to the GroES chaperonin family. Heptamer of 7 subunits arranged in a ring. Interacts with the chaperonin GroEL.

The protein localises to the cytoplasm. In terms of biological role, together with the chaperonin GroEL, plays an essential role in assisting protein folding. The GroEL-GroES system forms a nano-cage that allows encapsulation of the non-native substrate proteins and provides a physical environment optimized to promote and accelerate protein folding. GroES binds to the apical surface of the GroEL ring, thereby capping the opening of the GroEL channel. This chain is Co-chaperonin GroES, found in Buchnera aphidicola subsp. Pterocomma populeum.